A 147-amino-acid chain; its full sequence is Small ribosomal subunit protein uS9 (147 aa).

It belongs to the universal ribosomal protein uS9 family.

This is Small ribosomal subunit protein uS9 (rps16) from Dictyostelium discoideum (Social amoeba).